A 630-amino-acid chain; its full sequence is Beta-phellandrene synthase, chloroplastic (630 aa).

Residues 1–48 (MALVSSAPKSCLHKSLIRSTHHELKPLRRTIPTLGMCRRGKSFTPSVS) constitute a chloroplast transit peptide. Residues D381, D385, and D533 each coordinate Mg(2+). Positions 381–385 (DDIYD) match the DDXXD motif motif.

The protein belongs to the terpene synthase family. Tpsd subfamily. The cofactor is Mg(2+). Mn(2+) serves as cofactor. Requires K(+) as cofactor.

Its subcellular location is the plastid. It localises to the chloroplast. It carries out the reaction (2E)-geranyl diphosphate = (-)-beta-phellandrene + diphosphate. Its pathway is terpene metabolism; oleoresin biosynthesis. Converts geranyl diphosphate to four products with (-)-(4S)-beta-phellandrene (52%) as the major olefin, and lesser amounts of (-)-(1S,5S)-beta-pinene (34%), (-)-1S,5S-alpha-pinene (8.5%), and (-)-(4S)-limonene (6%). Involved in defensive oleoresin formation in conifers in response to insect attack or other injury. Involved in monoterpene (C10) olefins biosynthesis. The sequence is that of Beta-phellandrene synthase, chloroplastic (ag8) from Abies grandis (Grand fir).